A 157-amino-acid chain; its full sequence is Protein Smg homolog (157 aa).

Belongs to the Smg family.

This Shewanella loihica (strain ATCC BAA-1088 / PV-4) protein is Protein Smg homolog.